Consider the following 228-residue polypeptide: Glutamate transport system permease protein GluC (228 aa).

A run of 4 helical transmembrane segments spans residues 16–36, 64–84, 100–120, and 195–215; these read FWVT…LGTI, LTLV…LTLA, AVLG…RSGI, and LFVV…PMGL. The ABC transmembrane type-1 domain occupies 16–217; that stretch reads FWVTIQLTVY…ILTLPMGLGL (202 aa).

Belongs to the binding-protein-dependent transport system permease family. HisMQ subfamily. In terms of assembly, the complex is composed of two ATP-binding proteins (GluA), two transmembrane proteins (GluC and GluD) and a solute-binding protein (GluB).

Its subcellular location is the cell membrane. Its function is as follows. Part of the ABC transporter complex GluABCD involved in glutamate uptake. Probably responsible for the translocation of the substrate across the membrane. The protein is Glutamate transport system permease protein GluC of Corynebacterium efficiens (strain DSM 44549 / YS-314 / AJ 12310 / JCM 11189 / NBRC 100395).